The sequence spans 252 residues: Phosphate import ATP-binding protein PstB (252 aa).

The region spanning 6 to 247 (ITIEKLNLYY…PKDERTEKYI (242 aa)) is the ABC transporter domain. Residue 38 to 45 (GPSGCGKS) coordinates ATP.

Belongs to the ABC transporter superfamily. Phosphate importer (TC 3.A.1.7) family. In terms of assembly, the complex is composed of two ATP-binding proteins (PstB), two transmembrane proteins (PstC and PstA) and a solute-binding protein (PstS).

Its subcellular location is the cell membrane. It catalyses the reaction phosphate(out) + ATP + H2O = ADP + 2 phosphate(in) + H(+). In terms of biological role, part of the ABC transporter complex PstSACB involved in phosphate import. Responsible for energy coupling to the transport system. This chain is Phosphate import ATP-binding protein PstB, found in Lactobacillus delbrueckii subsp. bulgaricus (strain ATCC 11842 / DSM 20081 / BCRC 10696 / JCM 1002 / NBRC 13953 / NCIMB 11778 / NCTC 12712 / WDCM 00102 / Lb 14).